Reading from the N-terminus, the 92-residue chain is Small ribosomal subunit protein uS19c (92 aa).

It belongs to the universal ribosomal protein uS19 family.

It is found in the plastid. The protein localises to the chloroplast. Functionally, protein S19 forms a complex with S13 that binds strongly to the 16S ribosomal RNA. This Pisum sativum (Garden pea) protein is Small ribosomal subunit protein uS19c (rps19).